A 111-amino-acid chain; its full sequence is Large ribosomal subunit protein uL22 (111 aa).

This sequence belongs to the universal ribosomal protein uL22 family. In terms of assembly, part of the 50S ribosomal subunit.

Its function is as follows. This protein binds specifically to 23S rRNA; its binding is stimulated by other ribosomal proteins, e.g. L4, L17, and L20. It is important during the early stages of 50S assembly. It makes multiple contacts with different domains of the 23S rRNA in the assembled 50S subunit and ribosome. In terms of biological role, the globular domain of the protein is located near the polypeptide exit tunnel on the outside of the subunit, while an extended beta-hairpin is found that lines the wall of the exit tunnel in the center of the 70S ribosome. In Chlamydia abortus (strain DSM 27085 / S26/3) (Chlamydophila abortus), this protein is Large ribosomal subunit protein uL22.